Reading from the N-terminus, the 573-residue chain is Putative ABC transporter ATP-binding protein LJ_1704 (573 aa).

ABC transporter domains lie at 6–247 (IEFK…GVRE) and 303–536 (LKLD…ASLK). Residues 40-47 (GPSGSGKS) and 337-344 (GQNGAGKT) each bind ATP.

Belongs to the ABC transporter superfamily.

The protein resides in the cell membrane. In terms of biological role, probably part of an ABC transporter complex. Responsible for energy coupling to the transport system. This chain is Putative ABC transporter ATP-binding protein LJ_1704, found in Lactobacillus johnsonii (strain CNCM I-12250 / La1 / NCC 533).